Consider the following 221-residue polypeptide: Interleukin-12 subunit alpha (221 aa).

An N-terminal signal peptide occupies residues 1–25; that stretch reads MCPLRSLLLLSTLVLLHHLPHLSLG. 3 disulfide bridges follow: Cys-39/Cys-112, Cys-66/Cys-198, and Cys-87/Cys-125. Residues Asn-41 and Asn-95 are each glycosylated (N-linked (GlcNAc...) asparagine).

The protein belongs to the IL-6 superfamily. As to quaternary structure, heterodimer with IL12B; disulfide-linked. This heterodimer is known as interleukin IL-12. Heterodimer with EBI3/IL27B; not disulfide-linked. This heterodimer is known as interleukin IL-35. Interacts with NBR1; this interaction promotes IL-12 secretion.

Its subcellular location is the secreted. Heterodimerizes with IL12B to form the IL-12 cytokine or with EBI3/IL27B to form the IL-35 cytokine. IL-12 is primarily produced by professional antigen-presenting cells (APCs) such as B-cells and dendritic cells (DCs) as well as macrophages and granulocytes and regulates T-cell and natural killer-cell responses, induces the production of interferon-gamma (IFN-gamma), favors the differentiation of T-helper 1 (Th1) cells and is an important link between innate resistance and adaptive immunity. Mechanistically, exerts its biological effects through a receptor composed of IL12R1 and IL12R2 subunits. Binding to the receptor results in the rapid tyrosine phosphorylation of a number of cellular substrates including the JAK family kinases TYK2 and JAK2. In turn, recruited STAT4 gets phosphorylated and translocates to the nucleus where it regulates cytokine/growth factor responsive genes. As part of IL-35, plays essential roles in maintaining the immune homeostasis of the liver microenvironment and also functions as an immune-suppressive cytokine. Mediates biological events through unconventional receptors composed of IL12RB2 and gp130/IL6ST heterodimers or homodimers. Signaling requires the transcription factors STAT1 and STAT4, which form a unique heterodimer that binds to distinct DNA sites. This is Interleukin-12 subunit alpha (IL12A) from Cervus elaphus (Red deer).